Here is a 397-residue protein sequence, read N- to C-terminus: Metallophosphoesterase 1 (397 aa).

The chain crosses the membrane as a helical span at residues 27-47; the sequence is IAVVFAVLLFCEFLIYYLAIF. 6 residues coordinate a divalent metal cation: Asp-77, Asp-119, Asn-157, His-250, His-304, and His-306. Residues 357 to 377 traverse the membrane as a helical segment; it reads VVLIIYCGMVGFLVVLTLTHF. The Di-lysine motif motif lies at 393–397; that stretch reads KRKTR.

It belongs to the metallophosphoesterase superfamily. MPPE1 family. As to quaternary structure, interacts with GPI-anchor proteins (via the GPI portion). Interacts with TMED10. Requires Mn(2+) as cofactor.

Its subcellular location is the endoplasmic reticulum-Golgi intermediate compartment membrane. In terms of biological role, metallophosphoesterase that catalyzes the removal of a side-chain ethanolamine-phosphate (EtNP) from the second mannose of the GPI-anchor protein intermediate. Participates in the glycan remodeling steps of GPI-anchor maturation to allow an efficient transport of GPI-anchor proteins from the endoplasmic reticulum to the Golgi. This chain is Metallophosphoesterase 1, found in Pongo abelii (Sumatran orangutan).